The chain runs to 92 residues: Small ribosomal subunit protein uS19c (92 aa).

The protein belongs to the universal ribosomal protein uS19 family.

The protein resides in the plastid. Protein S19 forms a complex with S13 that binds strongly to the 16S ribosomal RNA. The polypeptide is Small ribosomal subunit protein uS19c (Cuscuta exaltata (Tall dodder)).